A 143-amino-acid polypeptide reads, in one-letter code: Translation initiation factor 2 subunit beta (143 aa).

Belongs to the eIF-2-beta/eIF-5 family. In terms of assembly, heterotrimer composed of an alpha, a beta and a gamma chain.

Its function is as follows. eIF-2 functions in the early steps of protein synthesis by forming a ternary complex with GTP and initiator tRNA. The polypeptide is Translation initiation factor 2 subunit beta (eif2b) (Methanocaldococcus jannaschii (strain ATCC 43067 / DSM 2661 / JAL-1 / JCM 10045 / NBRC 100440) (Methanococcus jannaschii)).